Here is a 155-residue protein sequence, read N- to C-terminus: MSVMKEFKEFAVKGNVVDMAVGIIIGGAFGAIVNNLVSQVILPPLGLLIGGVDFSSLYIILKEGATQAAPYNSLAEATAAGAVTLNYGVFLNSVFSFVIMAFAVFLLVKSINMLRRTEGSKSAVPAPSTTKECPYCLSSVPLKATRCPQCTSELK.

3 helical membrane passes run 16–36, 40–60, and 88–108; these read VVDM…VNNL, VILP…LYII, and GVFL…FLLV.

It belongs to the MscL family. Homopentamer.

Its subcellular location is the cell inner membrane. Channel that opens in response to stretch forces in the membrane lipid bilayer. May participate in the regulation of osmotic pressure changes within the cell. This is Large-conductance mechanosensitive channel from Chlorobium chlorochromatii (strain CaD3).